Consider the following 343-residue polypeptide: Stimulator of interferon genes protein homolog (343 aa).

A glycan (N-linked (GlcNAc...) asparagine) is linked at N84. 2 consecutive transmembrane segments (helical) span residues 87-107 and 109-129; these read IYLI…TGNY and NVMP…WSFT. N157 is a 3',2'-cGAMP binding site. N187 carries N-linked (GlcNAc...) asparagine glycosylation. Residues 195–215 traverse the membrane as a helical segment; that stretch reads LVILIPDEMFVNGVLESHLLD. The 3',2'-cGAMP site is built by R232, K235, E255, T258, and S262. N270 and N333 each carry an N-linked (GlcNAc...) asparagine glycan.

It belongs to the STING family.

It localises to the endoplasmic reticulum membrane. Facilitator of innate immune signaling that binds cyclic dinucleotides produced in response to infection by bacteria and/or viruses, and promotes the activation of the NF-kappa-B transcription factor Rel (Relish). Recognizes and binds cyclic di-GMP (c-di-GMP), a cyclic dinucleotide messenger produced by bacteria such as L.monocytogenes, leading to activation of the peptidoglycan recognition protein (IMD) signaling pathway and activation of Rel (Relish). Innate immune response is triggered in response to double-stranded RNA from viruses delivered to the cytoplasm: Sting acts by specifically binding cyclic dinucleotides 3',2'-cGAMP and 2',3'-cGAMP produced by cGlr1 and cGlr2 in response to RNA virus in the cytosol. Has a strong preference for 3',2'-cGAMP compared to other cyclic dinucleotides such as 2',3'-cGAMP or 3'3'-c-di-GMP. Upon binding to 3',2'-cGAMP, activates an antiviral immune response, leading to the activation of Rel (Relish). Activated in brain in response to Zika virus infection, leading to autophagy. The chain is Stimulator of interferon genes protein homolog from Drosophila melanogaster (Fruit fly).